A 705-amino-acid chain; its full sequence is Methionine--tRNA ligase (705 aa).

The 'HIGH' region signature appears at 17 to 27 (PYANGPVHLGH). Positions 149, 152, 162, and 165 each coordinate Zn(2+). The 'KMSKS' region motif lies at 347 to 351 (KFSKS). Residue Lys350 participates in ATP binding. The tRNA-binding domain occupies 604-705 (EFQKVDLRVA…GEGINGQSVQ (102 aa)).

The protein belongs to the class-I aminoacyl-tRNA synthetase family. MetG type 1 subfamily. As to quaternary structure, homodimer. Requires Zn(2+) as cofactor.

Its subcellular location is the cytoplasm. The catalysed reaction is tRNA(Met) + L-methionine + ATP = L-methionyl-tRNA(Met) + AMP + diphosphate. Its function is as follows. Is required not only for elongation of protein synthesis but also for the initiation of all mRNA translation through initiator tRNA(fMet) aminoacylation. This Chlorobium chlorochromatii (strain CaD3) protein is Methionine--tRNA ligase.